Reading from the N-terminus, the 448-residue chain is Proteases secretion protein PrtE (448 aa).

At 1–30 (MTGMDITTQDELNEAAMRDRASRDEERALR) the chain is on the cytoplasmic side. Residues 31–50 (LGWWLVLAGFGGFLLWALLA) form a helical membrane-spanning segment. The Periplasmic portion of the chain corresponds to 51 to 448 (PLDKGVAVQG…DRMHLALTEE (398 aa)).

The protein belongs to the membrane fusion protein (MFP) (TC 8.A.1) family.

Its subcellular location is the cell inner membrane. Involved in the secretion of proteases A, B, C and G. The sequence is that of Proteases secretion protein PrtE (prtE) from Dickeya chrysanthemi (Pectobacterium chrysanthemi).